The chain runs to 595 residues: Aspartate--tRNA(Asp/Asn) ligase (595 aa).

Glutamate 171 contributes to the L-aspartate binding site. The segment at 195-198 is aspartate; it reads QLFK. Residue arginine 217 coordinates L-aspartate. Residues 217–219 and glutamine 226 each bind ATP; that span reads RDE. Histidine 454 serves as a coordination point for L-aspartate. Residue glutamate 488 participates in ATP binding. L-aspartate is bound at residue arginine 495. 540 to 543 lines the ATP pocket; that stretch reads GLDR.

Belongs to the class-II aminoacyl-tRNA synthetase family. Type 1 subfamily. As to quaternary structure, homodimer.

It is found in the cytoplasm. It carries out the reaction tRNA(Asx) + L-aspartate + ATP = L-aspartyl-tRNA(Asx) + AMP + diphosphate. Aspartyl-tRNA synthetase with relaxed tRNA specificity since it is able to aspartylate not only its cognate tRNA(Asp) but also tRNA(Asn). Reaction proceeds in two steps: L-aspartate is first activated by ATP to form Asp-AMP and then transferred to the acceptor end of tRNA(Asp/Asn). The sequence is that of Aspartate--tRNA(Asp/Asn) ligase from Bordetella petrii (strain ATCC BAA-461 / DSM 12804 / CCUG 43448).